The chain runs to 256 residues: Ribonuclease HII (256 aa).

An RNase H type-2 domain is found at 72-256; that stretch reads ALICGIDEVG…TFEPIKSLVN (185 aa). The a divalent metal cation site is built by Asp-78, Glu-79, and Asp-170.

Belongs to the RNase HII family. Requires Mn(2+) as cofactor. The cofactor is Mg(2+).

Its subcellular location is the cytoplasm. It catalyses the reaction Endonucleolytic cleavage to 5'-phosphomonoester.. Its function is as follows. Endonuclease that specifically degrades the RNA of RNA-DNA hybrids. The chain is Ribonuclease HII from Staphylococcus saprophyticus subsp. saprophyticus (strain ATCC 15305 / DSM 20229 / NCIMB 8711 / NCTC 7292 / S-41).